The chain runs to 91 residues: Potassium channel toxin MeuTXK-beta-2 (91 aa).

Residues 1 to 19 form the signal peptide; the sequence is MQRNLVVLLFLGMVALSSC. The BetaSPN-type CS-alpha/beta domain occupies 54-91; it reads QFGCSAYQGYCDDHCQDIEKKEGFCHGFKCKCGIPMGF. 3 disulfide bridges follow: Cys-57-Cys-78, Cys-64-Cys-83, and Cys-68-Cys-85.

The protein belongs to the long chain scorpion toxin family. Class 1 subfamily. Expressed by the venom gland.

It is found in the secreted. Its function is as follows. Has a low affinity binding to potassium channels of rat brain synaptosomes. Displays weak antibacterial activity against Stenotrophomonas sp. Strongly inhibits the development of the Plasmodium berghei ookinetes. Displays slight hemolytic effect on mouse erythrocytes. Induces cytolysis on Xenopus oocytes at high concentrations. Is not toxic towards mice and towards the insect Tenebrio molitor. In Mesobuthus eupeus (Lesser Asian scorpion), this protein is Potassium channel toxin MeuTXK-beta-2.